The following is a 109-amino-acid chain: Thiosulfate sulfurtransferase GlpE (109 aa).

Residues 17–105 (KEGKTALVDI…WARSYPQDIT (89 aa)) enclose the Rhodanese domain. The Cysteine persulfide intermediate role is filled by Cys-65.

The protein belongs to the GlpE family.

The protein resides in the cytoplasm. The catalysed reaction is thiosulfate + hydrogen cyanide = thiocyanate + sulfite + 2 H(+). It catalyses the reaction thiosulfate + [thioredoxin]-dithiol = [thioredoxin]-disulfide + hydrogen sulfide + sulfite + 2 H(+). In terms of biological role, transferase that catalyzes the transfer of sulfur from thiosulfate to thiophilic acceptors such as cyanide or dithiols. May function in a CysM-independent thiosulfate assimilation pathway by catalyzing the conversion of thiosulfate to sulfite, which can then be used for L-cysteine biosynthesis. The protein is Thiosulfate sulfurtransferase GlpE of Yersinia pestis bv. Antiqua (strain Antiqua).